Consider the following 87-residue polypeptide: Defensin-like protein 175 (87 aa).

An N-terminal signal peptide occupies residues 1–23; that stretch reads MAKATSSLVVPIIFLVIFALVEQ. Intrachain disulfides connect Cys27–Cys66, Cys36–Cys55, Cys39–Cys60, and Cys43–Cys62.

The protein belongs to the DEFL family.

Its subcellular location is the secreted. This Arabidopsis thaliana (Mouse-ear cress) protein is Defensin-like protein 175.